The chain runs to 917 residues: Translation initiation factor IF-2 (917 aa).

Positions 102–249 (EKSQAEEQAL…KWTAEPKAPE (148 aa)) are enriched in basic and acidic residues. The interval 102–326 (EKSQAEEQAL…KSSTLQQGFH (225 aa)) is disordered. The segment covering 279-293 (RRGRTAKAPRAKKNN) has biased composition (basic residues). Residues 294–306 (RHSEKADREEARA) are compositionally biased toward basic and acidic residues. The tr-type G domain occupies 416 to 585 (SRAPVVTIMG…LLQAEVLELK (170 aa)). The tract at residues 425–432 (GHVDHGKT) is G1. 425–432 (GHVDHGKT) lines the GTP pocket. The interval 450-454 (GITQH) is G2. Residues 471 to 474 (DTPG) are G3. GTP contacts are provided by residues 471-475 (DTPGH) and 525-528 (NKID). Residues 525–528 (NKID) form a G4 region. The interval 561–563 (SAK) is G5.

This sequence belongs to the TRAFAC class translation factor GTPase superfamily. Classic translation factor GTPase family. IF-2 subfamily.

It is found in the cytoplasm. In terms of biological role, one of the essential components for the initiation of protein synthesis. Protects formylmethionyl-tRNA from spontaneous hydrolysis and promotes its binding to the 30S ribosomal subunits. Also involved in the hydrolysis of GTP during the formation of the 70S ribosomal complex. This Proteus vulgaris protein is Translation initiation factor IF-2 (infB).